We begin with the raw amino-acid sequence, 178 residues long: Protein AUXIN-REGULATED GENE INVOLVED IN ORGAN SIZE (178 aa).

Residues 1–85 are disordered; that stretch reads MYLLSPRNGD…GGGGGSNIRE (85 aa). Residues 10–27 show a composition bias toward acidic residues; sequence DEEDEQEEIQELISDDEP. Residues 33-47 are compositionally biased toward low complexity; sequence ASCATAASSSSSSGS. The segment at 100 to 151 is organ Size Related (OSR) domain; sequence FSVESLLLLVCVTASLVILPLVLPPLPPPPSMLMLVPVAMLVLLLALAFMPT. The next 2 helical transmembrane spans lie at 105-125 and 131-151; these read LLLL…LPPL and MLML…FMPT. Residues 153 to 178 form a disordered region; that stretch reads TSSSSSAGGGGGGGRNGATTGHAPYL. Residues 159–168 show a composition bias toward gly residues; it reads AGGGGGGGRN. The span at 169-178 shows a compositional bias: low complexity; sequence GATTGHAPYL.

This sequence belongs to the plant organ size related (OSR) protein family. As to expression, mostly expressed in young tissues such as young roots, young leaves, and seeds. Also present in stems, mature leaves, and spikelets.

It localises to the membrane. Its subcellular location is the nucleus. The protein resides in the cytoplasm. The protein localises to the endoplasmic reticulum. Promotes both cell expansion and proliferation-dependent organ growth. This is Protein AUXIN-REGULATED GENE INVOLVED IN ORGAN SIZE (ARGOS) from Oryza sativa subsp. japonica (Rice).